An 855-amino-acid polypeptide reads, in one-letter code: Valine--tRNA ligase (855 aa).

A 'HIGH' region motif is present at residues 44–54 (PNVTGVLHIGH). Positions 524-528 (KMSKT) match the 'KMSKS' region motif. Lys-527 is a binding site for ATP. A coiled-coil region spans residues 797–827 (KVEEDPARKQKEREQLEKNIANSKRQLGDEV).

This sequence belongs to the class-I aminoacyl-tRNA synthetase family. ValS type 1 subfamily. In terms of assembly, monomer.

The protein localises to the cytoplasm. It carries out the reaction tRNA(Val) + L-valine + ATP = L-valyl-tRNA(Val) + AMP + diphosphate. In terms of biological role, catalyzes the attachment of valine to tRNA(Val). As ValRS can inadvertently accommodate and process structurally similar amino acids such as threonine, to avoid such errors, it has a 'posttransfer' editing activity that hydrolyzes mischarged Thr-tRNA(Val) in a tRNA-dependent manner. The chain is Valine--tRNA ligase from Solibacter usitatus (strain Ellin6076).